We begin with the raw amino-acid sequence, 60 residues long: Mastoparan-VB1 (60 aa).

The N-terminal stretch at 1–23 is a signal peptide; it reads MKNTILLLFTAFIFLSGFFGMSA. Positions 24–45 are excised as a propeptide; the sequence is EALADPKADPLAGPFPDADPDP. AXPX repeat units follow at residues 27–30, 31–34, 35–38, and 40–43; these read ADPK, ADPL, AGPF, and DADP. At Leu-59 the chain carries Leucine amide.

Expressed by the venom gland.

Its subcellular location is the secreted. The protein localises to the target cell membrane. Its function is as follows. Antimicrobial peptide. Shows activity against both Gram-positive (S.aureus MIC=1.9-3.75 ug/ml) and -negative (E.coli MIC=15-60 ug/ml) bacteria, as well against fungi (C.albicans MIC=15 ug/ml). Also promotes moderate mast cell degranulation. Does not show hemolytic activity on rabbit and human erythrocytes. Its mast cell degranulation activity may be related to the activation of G-protein coupled receptors in mast cells as well as interaction with other proteins located in cell endosomal membranes in the mast cells. The chain is Mastoparan-VB1 from Vespa bicolor (Black shield wasp).